A 304-amino-acid chain; its full sequence is ATP phosphoribosyltransferase (304 aa).

The protein belongs to the ATP phosphoribosyltransferase family. Long subfamily. Mg(2+) serves as cofactor.

The protein resides in the cytoplasm. It carries out the reaction 1-(5-phospho-beta-D-ribosyl)-ATP + diphosphate = 5-phospho-alpha-D-ribose 1-diphosphate + ATP. Its pathway is amino-acid biosynthesis; L-histidine biosynthesis; L-histidine from 5-phospho-alpha-D-ribose 1-diphosphate: step 1/9. With respect to regulation, feedback inhibited by histidine. In terms of biological role, catalyzes the condensation of ATP and 5-phosphoribose 1-diphosphate to form N'-(5'-phosphoribosyl)-ATP (PR-ATP). Has a crucial role in the pathway because the rate of histidine biosynthesis seems to be controlled primarily by regulation of HisG enzymatic activity. This is ATP phosphoribosyltransferase from Xylella fastidiosa (strain 9a5c).